The chain runs to 157 residues: Crossover junction endodeoxyribonuclease RuvC (157 aa).

Catalysis depends on residues aspartate 7, glutamate 67, and aspartate 139. Mg(2+)-binding residues include aspartate 7, glutamate 67, and aspartate 139.

The protein belongs to the RuvC family. As to quaternary structure, homodimer which binds Holliday junction (HJ) DNA. The HJ becomes 2-fold symmetrical on binding to RuvC with unstacked arms; it has a different conformation from HJ DNA in complex with RuvA. In the full resolvosome a probable DNA-RuvA(4)-RuvB(12)-RuvC(2) complex forms which resolves the HJ. Requires Mg(2+) as cofactor.

It localises to the cytoplasm. It catalyses the reaction Endonucleolytic cleavage at a junction such as a reciprocal single-stranded crossover between two homologous DNA duplexes (Holliday junction).. The RuvA-RuvB-RuvC complex processes Holliday junction (HJ) DNA during genetic recombination and DNA repair. Endonuclease that resolves HJ intermediates. Cleaves cruciform DNA by making single-stranded nicks across the HJ at symmetrical positions within the homologous arms, yielding a 5'-phosphate and a 3'-hydroxyl group; requires a central core of homology in the junction. The consensus cleavage sequence is 5'-(A/T)TT(C/G)-3'. Cleavage occurs on the 3'-side of the TT dinucleotide at the point of strand exchange. HJ branch migration catalyzed by RuvA-RuvB allows RuvC to scan DNA until it finds its consensus sequence, where it cleaves and resolves the cruciform DNA. The polypeptide is Crossover junction endodeoxyribonuclease RuvC (Prochlorococcus marinus subsp. pastoris (strain CCMP1986 / NIES-2087 / MED4)).